The primary structure comprises 255 residues: Small ribosomal subunit protein uS2 (255 aa).

It belongs to the universal ribosomal protein uS2 family.

In Streptococcus pyogenes serotype M28 (strain MGAS6180), this protein is Small ribosomal subunit protein uS2.